A 1182-amino-acid polypeptide reads, in one-letter code: Lysine-specific demethylase hairless (1182 aa).

Disordered regions lie at residues 227–257 (LGLAPGGHLQQACESEGPSLHQRDGETGAGR), 302–380 (YQLG…KKTW), 411–443 (AGSPEVQGASRGPAPKRPSHPFPGTGRQGARAW), and 507–546 (TGHSQKSRRSPLEEKQLEEEDSSATSEEGGGGPGPEASLN). Pro residues predominate over residues 307–321 (PATPRCPSPGPPTPP). An LXXLL motif 1 motif is present at residues 561-565 (LCRLL). A C6-type zinc finger spans residues 595–620 (CSRCHHGLFNTHWRCSHCSHRLCVAC). A disordered region spans residues 697-746 (GDGGQQKEPTEKTPPTPQPSCNGDSNRTKDIKEETPDSTESPAEDGAGRS). Residues 722-731 (NRTKDIKEET) show a composition bias toward basic and acidic residues. Positions 753–757 (LCELL) match the LXXLL motif 2 motif. The region spanning 939–1150 (DASRVQNLAS…LSAQLYHQGA (212 aa)) is the JmjC domain. The Fe cation site is built by Cys1000, Glu1002, and His1118.

Requires Fe(2+) as cofactor. As to expression, expressed predominantly in brain, hair follicles and interfollicular epidermis. No expression in dermis.

Its subcellular location is the nucleus. The enzyme catalyses N(6),N(6)-dimethyl-L-lysyl(9)-[histone H3] + 2 2-oxoglutarate + 2 O2 = L-lysyl(9)-[histone H3] + 2 formaldehyde + 2 succinate + 2 CO2. Its function is as follows. Histone demethylase that specifically demethylates both mono- and dimethylated 'Lys-9' of histone H3. May act as a transcription regulator controlling hair biology (via targeting of collagens), neural activity, and cell cycle. This is Lysine-specific demethylase hairless (Hr) from Mus musculus (Mouse).